The sequence spans 345 residues: MGVCGSLFLPWKCLVVVSLRLLFLVPTGVPVRSGDATFPKAMDNVTVRQGESATLRCTIDNRVTRVAWLNRSTILYAGNDKWCLDPRVVLLSNTQTQYSIEIQNVDVYDEGPYTCSVQTDNHPKTSRVHLIVQVSPKIVEISSDISINEGNNISLTCIATGRPEPTVTWRHISPKAVGFVSEDEYLEIQGITREQSGYYECSASNDVAAPVVRRVKVTVNYPPYISEAKGTGVPVGQKGTLQCEASAVPSAEFQWYKDDKRLVEGKKGVKVENRPFLSKLIFFNVSEHDYGNYTCVASNKLGHTNASITLFGPGAVSEVSNGTSSRRAGCLWLLPLLVLHLLLKF.

Positions 1–30 (MGVCGSLFLPWKCLVVVSLRLLFLVPTGVP) are cleaved as a signal peptide. Ig-like C2-type domains are found at residues 39–126 (PKAM…PKTS), 136–218 (PKIV…VKVT), and 222–309 (PPYI…ASIT). 3 N-linked (GlcNAc...) asparagine glycosylation sites follow: Asn44, Asn70, and Asn152. An intrachain disulfide couples Cys57 to Cys115. Disulfide bonds link Cys157-Cys201 and Cys243-Cys295. Residues Asn284, Asn292, Asn305, and Asn321 are each glycosylated (N-linked (GlcNAc...) asparagine). Asn321 carries the GPI-anchor amidated asparagine lipid modification. Residues 322-345 (GTSSRRAGCLWLLPLLVLHLLLKF) constitute a propeptide, removed in mature form.

It belongs to the immunoglobulin superfamily. IgLON family.

The protein localises to the cell membrane. Neural cell adhesion molecule. This is Neurotrimin (NTM) from Bos taurus (Bovine).